Here is a 726-residue protein sequence, read N- to C-terminus: uncharacterized protein (726 aa).

Active-site charge relay system residues include Ser583 and His698.

This sequence belongs to the peptidase S9B family.

This is an uncharacterized protein from Sinorhizobium fredii (strain NBRC 101917 / NGR234).